Reading from the N-terminus, the 198-residue chain is Recombination protein RecR (198 aa).

Residues 57-72 (CSSCGHITDKDPCYIC) form a C4-type zinc finger. Residues 80 to 175 (SIICVVQDPK…KITRIAHGLP (96 aa)) enclose the Toprim domain.

The protein belongs to the RecR family.

May play a role in DNA repair. It seems to be involved in an RecBC-independent recombinational process of DNA repair. It may act with RecF and RecO. The chain is Recombination protein RecR from Anoxybacillus flavithermus (strain DSM 21510 / WK1).